A 475-amino-acid chain; its full sequence is Ankyrin repeat, SAM and basic leucine zipper domain-containing protein 1 (475 aa).

The interval 1–23 (MAAARFRGLAVAGGGESSESEDD) is disordered. A phosphoserine mark is found at Ser17, Ser18, and Ser20. ANK repeat units follow at residues 45–74 (EKNE…SVDS), 78–107 (YGWT…KASF), 110–144 (DKQT…DPNV), 148–177 (RLMT…EVNT), 181–210 (NGYT…NKML), and 214–243 (DGKT…PLEG). One can recognise an SAM domain in the interval 272-334 (SYTAFGDLEI…KILAALKELE (63 aa)).

In terms of assembly, interacts with DDX4, PIWIL1, RANBP9 and TDRD1.

Its subcellular location is the cytoplasm. Functionally, plays a central role during spermatogenesis by repressing transposable elements and preventing their mobilization, which is essential for the germline integrity. Acts via the piRNA metabolic process, which mediates the repression of transposable elements during meiosis by forming complexes composed of piRNAs and Piwi proteins and governs the methylation and subsequent repression of transposons. Its association with pi-bodies suggests a participation in the primary piRNAs metabolic process. Required prior to the pachytene stage to facilitate the production of multiple types of piRNAs, including those associated with repeats involved in the regulation of retrotransposons. May act by mediating protein-protein interactions during germ cell maturation. This Equus caballus (Horse) protein is Ankyrin repeat, SAM and basic leucine zipper domain-containing protein 1 (ASZ1).